A 280-amino-acid polypeptide reads, in one-letter code: Tritrans,polycis-undecaprenyl-diphosphate synthase (geranylgeranyl-diphosphate specific) (280 aa).

Aspartate 57 is a catalytic residue. Residue aspartate 57 coordinates Mg(2+). Substrate is bound by residues 58–61 (GNRR), arginine 70, histidine 74, and 102–104 (STE). The active-site Proton acceptor is the asparagine 105. Substrate contacts are provided by residues phenylalanine 106, arginine 108, arginine 229, and 235-237 (RIS). Glutamate 248 is a binding site for Mg(2+).

Belongs to the UPP synthase family. In terms of assembly, homodimer. The cofactor is Mg(2+).

The catalysed reaction is geranylgeranyl diphosphate + 7 isopentenyl diphosphate = tri-trans,hepta-cis-undecaprenyl diphosphate + 7 diphosphate. Catalyzes the sequential condensation of isopentenyl diphosphate (IPP) with geranylgeranyl diphosphate (GGPP) to yield (2Z,6Z,10Z,14Z,18Z,22Z,26Z,30E,34E,38E)-undecaprenyl diphosphate (tritrans,heptacis-UPP). It is probably the precursor of glycosyl carrier lipids. This chain is Tritrans,polycis-undecaprenyl-diphosphate synthase (geranylgeranyl-diphosphate specific), found in Methanocaldococcus jannaschii (strain ATCC 43067 / DSM 2661 / JAL-1 / JCM 10045 / NBRC 100440) (Methanococcus jannaschii).